Consider the following 69-residue polypeptide: Toxin Tz2 (69 aa).

Residues 1-7 (IEVVMGG) form the signal peptide. The LCN-type CS-alpha/beta domain maps to 8 to 69 (KEGYLLDKSN…KMWDLKTNKC (62 aa)). 4 cysteine pairs are disulfide-bonded: Cys-19–Cys-69, Cys-23–Cys-45, Cys-31–Cys-50, and Cys-35–Cys-52.

Belongs to the long (4 C-C) scorpion toxin superfamily. Sodium channel inhibitor family. Beta subfamily. As to expression, expressed by the venom gland.

The protein resides in the secreted. Beta toxins bind voltage-independently at site-4 of sodium channels (Nav) and shift the voltage of activation toward more negative potentials thereby affecting sodium channel activation and promoting spontaneous and repetitive firing. In Tityus zulianus (Venezuelan scorpion), this protein is Toxin Tz2.